A 383-amino-acid chain; its full sequence is L-lactate dehydrogenase (383 aa).

Positions 1–380 constitute an FMN hydroxy acid dehydrogenase domain; it reads MIISSGNDYR…NTDCLVQAIK (380 aa). Tyr24 is a substrate binding site. Positions 106 and 127 each coordinate FMN. Position 129 (Tyr129) interacts with substrate. Position 155 (Thr155) interacts with FMN. Substrate is bound at residue Arg164. Lys251 is a binding site for FMN. The active-site Proton acceptor is His275. Arg278 is a substrate binding site. 306–330 is a binding site for FMN; the sequence is DSGIRNGLDVVRMLALGADTVLLGR.

Belongs to the FMN-dependent alpha-hydroxy acid dehydrogenase family. Requires FMN as cofactor.

It is found in the cell inner membrane. It catalyses the reaction (S)-lactate + A = pyruvate + AH2. Catalyzes the conversion of L-lactate to pyruvate. Is coupled to the respiratory chain. The polypeptide is L-lactate dehydrogenase (Acinetobacter baumannii (strain SDF)).